The following is a 97-amino-acid chain: Large ribosomal subunit protein bL25 (97 aa).

It belongs to the bacterial ribosomal protein bL25 family. As to quaternary structure, part of the 50S ribosomal subunit; part of the 5S rRNA/L5/L18/L25 subcomplex. Contacts the 5S rRNA. Binds to the 5S rRNA independently of L5 and L18.

Functionally, this is one of the proteins that binds to the 5S RNA in the ribosome where it forms part of the central protuberance. This Blochmanniella pennsylvanica (strain BPEN) protein is Large ribosomal subunit protein bL25.